We begin with the raw amino-acid sequence, 175 residues long: NADH-ubiquinone oxidoreductase chain 6 (175 aa).

Transmembrane regions (helical) follow at residues 1-21 (MMYIVFIMSVLYVVGFIGFSS), 24-44 (SPVYGGMSLVVSGGLGCGIIM), 51-71 (LGLVVFLVYLGGMMVVFGYTI), 87-107 (VVLSAFLVGLLMEVFMVVWLF), 112-132 (ELVGFYFGGLESFVTLGEGGF), and 148-168 (CGFWFLAMAGWMLFVSIFIAT).

The protein belongs to the complex I subunit 6 family. As to quaternary structure, core subunit of respiratory chain NADH dehydrogenase (Complex I) which is composed of 45 different subunits.

Its subcellular location is the mitochondrion inner membrane. The enzyme catalyses a ubiquinone + NADH + 5 H(+)(in) = a ubiquinol + NAD(+) + 4 H(+)(out). Core subunit of the mitochondrial membrane respiratory chain NADH dehydrogenase (Complex I) which catalyzes electron transfer from NADH through the respiratory chain, using ubiquinone as an electron acceptor. Essential for the catalytic activity and assembly of complex I. The chain is NADH-ubiquinone oxidoreductase chain 6 (MT-ND6) from Elephas maximus (Indian elephant).